The following is a 495-amino-acid chain: Cobyric acid synthase (495 aa).

A GATase cobBQ-type domain is found at 262-445 (CLEIAVIRLP…LHGLFDNHRW (184 aa)). The active-site Nucleophile is Cys-340. His-437 is a catalytic residue.

It belongs to the CobB/CobQ family. CobQ subfamily.

The protein operates within cofactor biosynthesis; adenosylcobalamin biosynthesis. Its function is as follows. Catalyzes amidations at positions B, D, E, and G on adenosylcobyrinic A,C-diamide. NH(2) groups are provided by glutamine, and one molecule of ATP is hydrogenolyzed for each amidation. The chain is Cobyric acid synthase from Synechococcus sp. (strain JA-3-3Ab) (Cyanobacteria bacterium Yellowstone A-Prime).